The sequence spans 1607 residues: Putative molluscan insulin-related peptide(s) receptor (1607 aa).

The first 35 residues, 1–35 (MHPGSISFNMIINKCIPICLFILFIMMMEFTVSKA), serve as a signal peptide directing secretion. N-linked (GlcNAc...) asparagine glycans are attached at residues N82, N188, N245, N275, N332, N343, N495, N520, N663, N710, N778, N796, N802, N868, N879, N940, and N953. Fibronectin type-III domains lie at 517-632 (HDLN…TYPF), 636-726 (EPTD…SKEE), and 756-861 (LPDE…TKDS). Residues 698-975 (EKVKIEEEGK…RPPDPESSNT (278 aa)) lie on the Extracellular side of the membrane. The Fibronectin type-III 4 domain occupies 870–967 (TTVDTEIETN…LERFFIVPRP (98 aa)). Residues 976-996 (LLIVAIVLAFFGVLTVSLIVA) form a helical membrane-spanning segment. The Cytoplasmic segment spans residues 997-1607 (CVYYKQKIRS…WSTLKMVLVL (611 aa)). The 272-residue stretch at 1037–1308 (IKLIKELGQG…AIIEYLLPKL (272 aa)) folds into the Protein kinase domain. ATP is bound by residues 1043–1051 (LGQGSFGMV) and K1072. D1173 functions as the Proton acceptor in the catalytic mechanism. Y1199 is subject to Phosphotyrosine; by autocatalysis. Disordered stretches follow at residues 1328-1352 (GAGEGTLAEPEGSDDSSSINSLSCE) and 1501-1539 (TLNGNQSSHNNNSFELMTPDPLKSGPASESSNGVSSSSW). Polar residues predominate over residues 1503–1515 (NGNQSSHNNNSFE). Residues 1524-1538 (SGPASESSNGVSSSS) are compositionally biased toward low complexity.

It belongs to the protein kinase superfamily. Tyr protein kinase family. Insulin receptor subfamily. Probable tetramer of 2 alpha and 2 beta chains linked by disulfide bonds. The alpha chains contribute to the formation of the ligand-binding domain, while the beta chains carry the kinase domain. Mn(2+) is required as a cofactor.

The protein localises to the membrane. The enzyme catalyses L-tyrosyl-[protein] + ATP = O-phospho-L-tyrosyl-[protein] + ADP + H(+). Functionally, this receptor probably binds to the four different molluscan insulin-related peptides and has a tyrosine-protein kinase activity. In Lymnaea stagnalis (Great pond snail), this protein is Putative molluscan insulin-related peptide(s) receptor.